Reading from the N-terminus, the 199-residue chain is Puromycin N-acetyltransferase (199 aa).

One can recognise an N-acetyltransferase domain in the interval 6 to 198 (PTVRLATRDD…RTWCMTRKPG (193 aa)).

Detoxification of puromycin. In Streptomyces alboniger, this protein is Puromycin N-acetyltransferase (pac).